A 161-amino-acid polypeptide reads, in one-letter code: PTS system glucose-specific EIIA component (161 aa).

Residues 31-135 (DPVFSKKIVG…SILTPVVISN (105 aa)) form the PTS EIIA type-1 domain. Zn(2+) is bound by residues His-68 and His-83. The Tele-phosphohistidine intermediate; for EIIA activity role is filled by His-83. The residue at position 83 (His-83) is a Phosphohistidine; by HPr.

The cofactor is Zn(2+).

The protein localises to the cytoplasm. In terms of biological role, the phosphoenolpyruvate-dependent sugar phosphotransferase system (sugar PTS), a major carbohydrate active transport system, catalyzes the phosphorylation of incoming sugar substrates concomitantly with their translocation across the cell membrane. The enzyme II complex composed of PtsG and Crr is involved in glucose transport. This Buchnera aphidicola subsp. Acyrthosiphon pisum (strain APS) (Acyrthosiphon pisum symbiotic bacterium) protein is PTS system glucose-specific EIIA component (crr).